The following is a 222-amino-acid chain: Putative N-acetylmannosamine-6-phosphate 2-epimerase (222 aa).

It belongs to the NanE family.

It carries out the reaction an N-acyl-D-glucosamine 6-phosphate = an N-acyl-D-mannosamine 6-phosphate. The protein operates within amino-sugar metabolism; N-acetylneuraminate degradation; D-fructose 6-phosphate from N-acetylneuraminate: step 3/5. Functionally, converts N-acetylmannosamine-6-phosphate (ManNAc-6-P) to N-acetylglucosamine-6-phosphate (GlcNAc-6-P). The polypeptide is Putative N-acetylmannosamine-6-phosphate 2-epimerase (Staphylococcus saprophyticus subsp. saprophyticus (strain ATCC 15305 / DSM 20229 / NCIMB 8711 / NCTC 7292 / S-41)).